The primary structure comprises 490 residues: MNWSNTPSFLEKQRQRLERYQFQIKVSEQGRVVSVGDGIIWIKGLPGAAIDEILISEDECCIAMVFHLTEELVGAVMLVQTKKLKAGTPIFPLKRVLSIPVGDKLLGRVIDPLGHPLDGGEIPPHEEQGLLDRLSPPILHRDFVNRPLYTGNKMLDNLIPIGKGQRELLIGDNGLGKSALALDIVMNQKDKKVYCVYVLIGQKRSTVSSTIQLLKEANALDYTTVVVAQATALPGLLYLAPFAGCAIAEHWMKKGLDALVIYDDLSAHANSYRELSLLLRRPPGREAFPADIFYLHSRLLERSTCLSPALGGGSMTALPIIETKEGEMATYIPTNLISITDGQIFFDESLFSSGFLPAIDITKSVSRVGGKAQHPQIKKESGRMKLDYLQFLDLELFTRFGAKLDAKMQKQIQKGRVLREILKQERFSPLPIEFQLAWLIAYNEGFFDELNLEDIPKMLKKIEEEIKQSTLSLGSPREQWKKAIKEWLMA.

Belongs to the ATPase alpha/beta chains family. As to quaternary structure, F-type ATPases have 2 components, CF(1) - the catalytic core - and CF(0) - the membrane proton channel. CF(1) has five subunits: alpha(3), beta(3), gamma(1), delta(1), epsilon(1). CF(0) has three main subunits: a(1), b(2) and c(9-12). The alpha and beta chains form an alternating ring which encloses part of the gamma chain. CF(1) is attached to CF(0) by a central stalk formed by the gamma and epsilon chains, while a peripheral stalk is formed by the delta and b chains.

The protein resides in the cell inner membrane. The catalysed reaction is ATP + H2O + 4 H(+)(in) = ADP + phosphate + 5 H(+)(out). Its function is as follows. Produces ATP from ADP in the presence of a proton gradient across the membrane. The alpha chain is a regulatory subunit. The sequence is that of ATP synthase subunit alpha 1 from Legionella pneumophila (strain Paris).